The primary structure comprises 363 residues: UDP-N-acetylglucosamine--N-acetylmuramyl-(pentapeptide) pyrophosphoryl-undecaprenol N-acetylglucosamine transferase (363 aa).

UDP-N-acetyl-alpha-D-glucosamine-binding positions include 10-12, Asn-124, Ser-195, Ile-250, and Gln-295; that span reads TGG.

Belongs to the glycosyltransferase 28 family. MurG subfamily.

It localises to the cell membrane. The catalysed reaction is di-trans,octa-cis-undecaprenyl diphospho-N-acetyl-alpha-D-muramoyl-L-alanyl-D-glutamyl-meso-2,6-diaminopimeloyl-D-alanyl-D-alanine + UDP-N-acetyl-alpha-D-glucosamine = di-trans,octa-cis-undecaprenyl diphospho-[N-acetyl-alpha-D-glucosaminyl-(1-&gt;4)]-N-acetyl-alpha-D-muramoyl-L-alanyl-D-glutamyl-meso-2,6-diaminopimeloyl-D-alanyl-D-alanine + UDP + H(+). Its pathway is cell wall biogenesis; peptidoglycan biosynthesis. Cell wall formation. Catalyzes the transfer of a GlcNAc subunit on undecaprenyl-pyrophosphoryl-MurNAc-pentapeptide (lipid intermediate I) to form undecaprenyl-pyrophosphoryl-MurNAc-(pentapeptide)GlcNAc (lipid intermediate II). In Listeria monocytogenes serotype 4a (strain HCC23), this protein is UDP-N-acetylglucosamine--N-acetylmuramyl-(pentapeptide) pyrophosphoryl-undecaprenol N-acetylglucosamine transferase.